Here is a 546-residue protein sequence, read N- to C-terminus: CTP synthase (546 aa).

The interval methionine 1–leucine 266 is amidoligase domain. A CTP-binding site is contributed by serine 13. A UTP-binding site is contributed by serine 13. Serine 14 to leucine 19 contacts ATP. Tyrosine 54 serves as a coordination point for L-glutamine. Aspartate 71 contributes to the ATP binding site. Mg(2+) contacts are provided by aspartate 71 and glutamate 140. CTP is bound by residues aspartate 147–glutamate 149, lysine 187–glutamine 192, and lysine 223. UTP contacts are provided by residues lysine 187 to glutamine 192 and lysine 223. The Glutamine amidotransferase type-1 domain maps to asparagine 293–leucine 545. Residue alanine 357 participates in L-glutamine binding. Cysteine 384 (nucleophile; for glutamine hydrolysis) is an active-site residue. L-glutamine is bound by residues phenylalanine 385–glutamine 388, glutamate 408, and arginine 473. Catalysis depends on residues histidine 518 and glutamate 520.

The protein belongs to the CTP synthase family. In terms of assembly, homotetramer.

The enzyme catalyses UTP + L-glutamine + ATP + H2O = CTP + L-glutamate + ADP + phosphate + 2 H(+). It carries out the reaction L-glutamine + H2O = L-glutamate + NH4(+). It catalyses the reaction UTP + NH4(+) + ATP = CTP + ADP + phosphate + 2 H(+). Its pathway is pyrimidine metabolism; CTP biosynthesis via de novo pathway; CTP from UDP: step 2/2. Allosterically activated by GTP, when glutamine is the substrate; GTP has no effect on the reaction when ammonia is the substrate. The allosteric effector GTP functions by stabilizing the protein conformation that binds the tetrahedral intermediate(s) formed during glutamine hydrolysis. Inhibited by the product CTP, via allosteric rather than competitive inhibition. Catalyzes the ATP-dependent amination of UTP to CTP with either L-glutamine or ammonia as the source of nitrogen. Regulates intracellular CTP levels through interactions with the four ribonucleotide triphosphates. This Phenylobacterium zucineum (strain HLK1) protein is CTP synthase.